The sequence spans 878 residues: E3 ubiquitin-protein ligase SH3RF3 (878 aa).

The segment at 19 to 40 (RGEGEDRQGEQQRGAQARTEED) is disordered. Residues 52-93 (CSVCLERLDTTAKVLPCQHTFCRRCLESIVCSRHELRCPECR) form an RING-type zinc finger. Residues 120–145 (PRTGASPGSSPPARPGPGTFSALAGG) form a disordered region. SH3 domains follow at residues 187–246 (SQLP…CVRP) and 249–312 (QALP…LNDS). The interaction with RAC1 stretch occupies residues 364–433 (RVDSKKNAKK…TVPTQDSSSA (70 aa)). At Ser-395 the chain carries Phosphoserine. In terms of domain architecture, SH3 3 spans 458 to 519 (LPLNVYLALY…PGNYVTPVSR (62 aa)). 2 disordered regions span residues 574–659 (QHPA…CPRP) and 688–758 (PISG…MGPE). 4 stretches are compositionally biased toward polar residues: residues 590 to 609 (AQPT…THAS), 618 to 633 (ATVS…SRLP), 643 to 653 (ASPQHGQQSPA), and 690 to 699 (SGLSTPSLIN). Positions 703–716 (KPDDKKNEKKEKKS) are enriched in basic and acidic residues. Polar residues predominate over residues 741–752 (HDPQSAMDTSLQ). A Phosphoserine modification is found at Ser-792. Positions 819–878 (LPRERYRVVVSYPPQSEAEIELKEGDIVFVHKKHEDGWFKGTLQRNGRTGLFPGSFVESF) constitute an SH3 4 domain.

The protein belongs to the SH3RF family. As to quaternary structure, interacts (via SH3 domain 3) with PAK2. Interacts with RAC1 (GTP-bound form). In terms of processing, autoubiquitinated.

It catalyses the reaction S-ubiquitinyl-[E2 ubiquitin-conjugating enzyme]-L-cysteine + [acceptor protein]-L-lysine = [E2 ubiquitin-conjugating enzyme]-L-cysteine + N(6)-ubiquitinyl-[acceptor protein]-L-lysine.. It participates in protein modification; protein ubiquitination. Its function is as follows. Has E3 ubiquitin-protein ligase activity. In Mus musculus (Mouse), this protein is E3 ubiquitin-protein ligase SH3RF3 (Sh3rf3).